A 1701-amino-acid polypeptide reads, in one-letter code: Merozoite surface protein 1 (1701 aa).

Positions 1–19 (MKIIFFLCSFLFFIINTQC) are cleaved as a signal peptide. The segment covering 89–100 (GSGGSVASGGSG) has biased composition (gly residues). Residues 89–118 (GSGGSVASGGSGNSRRTNPSDNSSDSNTKT) form a disordered region. Over residues 101 to 116 (NSRRTNPSDNSSDSNT) the composition is skewed to low complexity. N-linked (GlcNAc...) asparagine glycans are attached at residues N110 and N239. The segment at 322 to 344 (DAENPTTGSKPNPLPENKKKEVE) is disordered. N470, N536, and N607 each carry an N-linked (GlcNAc...) asparagine glycan. The segment at 704 to 739 (SETTEDGGHSTHTLSQSGETEVTEETEVTEETVGHT) is disordered. The segment covering 724-733 (EVTEETEVTE) has biased composition (acidic residues). N-linked (GlcNAc...) asparagine glycosylation is found at N802, N899, N919, N965, N991, N1089, and N1196. Low complexity predominate over residues 889–927 (TGTSSTSSPGNTTVNTAQSATHSNSQNQQSNASSTNTQN). The disordered stretch occupies residues 889–936 (TGTSSTSSPGNTTVNTAQSATHSNSQNQQSNASSTNTQNGVAVSSGPA). 2 disordered regions span residues 1230–1259 (TPPQPDVTPSPLSVRVSGSSGSTKEETQIP) and 1451–1472 (KEKFPSSPPTTPPSPAKTDEQK). Over residues 1245 to 1259 (VSGSSGSTKEETQIP) the composition is skewed to polar residues. The span at 1456–1465 (SSPPTTPPSP) shows a compositional bias: pro residues. N-linked (GlcNAc...) asparagine glycosylation is present at N1588. EGF-like domains are found at residues 1592 to 1632 (HQCV…VENP) and 1633 to 1680 (NPTC…IFCS). Disulfide bonds link C1594–C1605, C1599–C1615, C1617–C1628, C1636–C1649, C1643–C1663, and C1665–C1679. A lipid anchor (GPI-anchor amidated serine) is attached at S1680. A propeptide spans 1681–1701 (SSNFLGISFLLILMLILYSFI) (removed in mature form).

Forms a complex composed of subunits p83, p30, p38, and p42 which remain non-covalently associated; the complex is formed at the merozoite surface prior to egress from host erythrocytes. Forms a complex composed of processed MSP1 subunits, MSP6 subunit p36 and MSP7; the complex is formed at the merozoite surface prior to egress from host erythrocytes. Within the complex, interacts (via subunit p38) with MSP6 subunit p36 and (via subunits p83, p30 and p38) with MSP7 (via subunit p22). Forms a complex composed of MSP1, MSP6, DBLMSP1 and DBLMSP2. Within the complex, interacts (via subunit p38) with DBLMSP1 and DBLMSP2. Forms a complex composed of MSP1, and rhoptry proteins RhopH3, RAP1 and CLAG9/RhopH3. Within the complex, interacts (via subunits p42 and p19) with RhopH3 (via C-terminus). Forms a complex composed of MSP1, MSP6, MSP7, MSP9 and MSP3; within the complex, MSP6 and MSP9 mediate the binding to the host erythrocyte. Interacts (via subunits p19 and p42) with MSP9; the interaction is direct; MSP1 subunits p19 or p42, and MSP9 form a co-ligand complex that interacts with host SLC4A1/Band 3 protein. May interact with PFD6. Interacts with host spectrin. As to quaternary structure, interacts with host glycophorin GYPA in a sialic acid-independent manner. In terms of assembly, interacts with host proinflammatory cytokine S100P; the interaction blocks S100P inflammatory and chemotactic activities. Interacts with host SLC4A1/Band 3 (via 5ABC region) on the host erythrocyte surface in a sialic acid-independent manner. The p190 precursor is cleaved by SUB1 prior to merozoite egress into 4 subunits p83, p30, p38, and p42 which remain non-covalently associated. SUB1-mediated proteolytic cleavage occurs in an orderly manner; the first cleavage occurs at the p30/p38 site, followed by cleavage at the p83/p30 site, the last cleavage occurs at the p38/p42 site. The order of cleavage is essential for parasite viability. SUB1-mediated processing is essential for merozoite egress. In a second processing step during erythrocyte invasion, p42 is cleaved by SUB2 into p33 and p19; the latter remains attached to the merozoite surface via its GPI-anchor and is endocytosed during the subsequent ring stage.

It localises to the cell membrane. Its subcellular location is the secreted. The protein localises to the vacuole membrane. Functionally, during the asexual blood stage, involved in merozoite egress from host erythrocytes possibly via its interaction with the host cytoskeleton protein spectrin resulting in the destabilization of the host cytoskeleton and thus leading to erythrocyte cell membrane rupture. Involved in the binding to host erythrocytes and is required for host erythrocyte invasion. By binding to host proinflammatory cytokine S100P may interfere with host immune responses. Its function is as follows. Involved in merozoite invasion of host erythrocytes. May play a role in the biogenesis and/or function of the food vacuole during the intraerythrocytic development. The sequence is that of Merozoite surface protein 1 from Plasmodium falciparum (isolate mad20 / Papua New Guinea).